The chain runs to 282 residues: Protein-glutamine deamidase Cif (282 aa).

The tract at residues 1 to 16 (MKDITLPPPTSASCLT) is translocation domain (TD). Residues C109, H165, and Q185 contribute to the active site.

The protein belongs to the Cif family.

The protein resides in the secreted. It is found in the host nucleus. It carries out the reaction L-glutaminyl-[protein] + H2O = L-glutamyl-[protein] + NH4(+). Protein-glutamine deamidase effector that inhibits the host cell cycle and other key cellular processes such as the actin network and programmed-cell death. Acts by mediating the side chain deamidation of 'Gln-40' of host NEDD8, converting it to glutamate, thereby abolishing the activity of cullin-RING-based E3 ubiquitin-protein ligase complexes (CRL complexes). Inactivation of CRL complexes prevents ubiquitination and subsequent degradation of the cyclin-dependent kinase inhibitors CDKN1A/p21 and CDKN1B/p27, leading to G1 and G2 cell cycle arrests in host cells. Also able to catalyze deamidation of 'Gln-40' of host ubiquitin in vitro; however, NEDD8 constitutes the preferred substrate in vivo. This Escherichia coli protein is Protein-glutamine deamidase Cif.